We begin with the raw amino-acid sequence, 87 residues long: Beta-toxin Ct17 (87 aa).

The signal sequence occupies residues 1-19; sequence MNSLLMITACLVLIGTVWA. Residues 20–85 form the LCN-type CS-alpha/beta domain; the sequence is KKDGYLVDKT…TWPLPNKRCG (66 aa). 4 cysteine pairs are disulfide-bonded: C31/C84, C35/C60, C44/C65, and C48/C67. Cysteine amide is present on C84.

The protein belongs to the long (4 C-C) scorpion toxin superfamily. Sodium channel inhibitor family. Beta subfamily. Expressed by the venom gland.

It is found in the secreted. Functionally, beta toxins bind voltage-independently at site-4 of sodium channels (Nav) and shift the voltage of activation toward more negative potentials thereby affecting sodium channel activation and promoting spontaneous and repetitive firing. Is possibly lethal to mice, freshwater shrimp and crickets. This Centruroides tecomanus (Scorpion) protein is Beta-toxin Ct17.